A 207-amino-acid chain; its full sequence is Guanylate kinase (207 aa).

Residues 4 to 184 (GLLFIVSAPS…AVSDLYKIIR (181 aa)) form the Guanylate kinase-like domain. Position 11–18 (11–18 (APSGTGKS)) interacts with ATP.

It belongs to the guanylate kinase family.

It is found in the cytoplasm. It catalyses the reaction GMP + ATP = GDP + ADP. Functionally, essential for recycling GMP and indirectly, cGMP. The polypeptide is Guanylate kinase (Buchnera aphidicola subsp. Baizongia pistaciae (strain Bp)).